The chain runs to 86 residues: Long neurotoxin homolog (86 aa).

The N-terminal stretch at M1 to T21 is a signal peptide. Cystine bridges form between C24/C45, C27/C32, C38/C63, C67/C78, and C79/C84.

This sequence belongs to the three-finger toxin family. Ancestral subfamily. Orphan group II sub-subfamily. In terms of tissue distribution, expressed by the venom gland.

It localises to the secreted. Its function is as follows. Binds with low affinity and weakly inhibits muscle nicotinic acetylcholine receptor (nAChR). The polypeptide is Long neurotoxin homolog (Naja atra (Chinese cobra)).